A 129-amino-acid polypeptide reads, in one-letter code: Aspartate 1-decarboxylase (129 aa).

Ser25 acts as the Schiff-base intermediate with substrate; via pyruvic acid in catalysis. Ser25 is subject to Pyruvic acid (Ser). Thr57 lines the substrate pocket. The Proton donor role is filled by Tyr58. Residue 73–75 (GAA) coordinates substrate.

The protein belongs to the PanD family. Heterooctamer of four alpha and four beta subunits. The cofactor is pyruvate. In terms of processing, is synthesized initially as an inactive proenzyme, which is activated by self-cleavage at a specific serine bond to produce a beta-subunit with a hydroxyl group at its C-terminus and an alpha-subunit with a pyruvoyl group at its N-terminus.

The protein resides in the cytoplasm. It catalyses the reaction L-aspartate + H(+) = beta-alanine + CO2. It participates in cofactor biosynthesis; (R)-pantothenate biosynthesis; beta-alanine from L-aspartate: step 1/1. Functionally, catalyzes the pyruvoyl-dependent decarboxylation of aspartate to produce beta-alanine. The polypeptide is Aspartate 1-decarboxylase (Chlorobium chlorochromatii (strain CaD3)).